A 23-amino-acid polypeptide reads, in one-letter code: Augerpeptide hhe7a (23 aa).

3 disulfides stabilise this stretch: Cys3–Cys11, Cys6–Cys19, and Cys10–Cys22.

In terms of tissue distribution, expressed by the venom duct.

It is found in the secreted. Functionally, causes abnormal twist followed by immobility when injected into C.elegans. The protein is Augerpeptide hhe7a of Hastula hectica (Sea snail).